A 352-amino-acid chain; its full sequence is tRNA-specific 2-thiouridylase MnmA (352 aa).

Position 6–13 (6–13 (AVSGGTDS)) interacts with ATP. The Nucleophile role is filled by Cys-92. Cysteines 92 and 189 form a disulfide. Gly-116 is a binding site for ATP. The segment at 139 to 141 (KDQ) is interaction with tRNA. Cys-189 (cysteine persulfide intermediate) is an active-site residue. The interaction with tRNA stretch occupies residues 294-295 (RY).

This sequence belongs to the MnmA/TRMU family.

The protein localises to the cytoplasm. It carries out the reaction S-sulfanyl-L-cysteinyl-[protein] + uridine(34) in tRNA + AH2 + ATP = 2-thiouridine(34) in tRNA + L-cysteinyl-[protein] + A + AMP + diphosphate + H(+). Its function is as follows. Catalyzes the 2-thiolation of uridine at the wobble position (U34) of tRNA, leading to the formation of s(2)U34. The protein is tRNA-specific 2-thiouridylase MnmA of Lawsonia intracellularis (strain PHE/MN1-00).